The chain runs to 366 residues: A-type ATP synthase subunit C (366 aa).

It belongs to the V-ATPase V0D/AC39 subunit family. As to quaternary structure, has multiple subunits with at least A(3), B(3), C, D, E, F, H, I and proteolipid K(x).

Its subcellular location is the cell membrane. In terms of biological role, component of the A-type ATP synthase that produces ATP from ADP in the presence of a proton gradient across the membrane. The chain is A-type ATP synthase subunit C from Thermococcus gammatolerans (strain DSM 15229 / JCM 11827 / EJ3).